A 430-amino-acid polypeptide reads, in one-letter code: Dihydroorotase (430 aa).

Zn(2+) is bound by residues His-57 and His-59. Substrate is bound by residues 59-61 and Asn-91; that span reads HLR. The Zn(2+) site is built by Asp-151, His-178, and His-231. Asn-277 contacts substrate. Zn(2+) is bound at residue Asp-304. Residue Asp-304 is part of the active site. Residues His-308 and 322–323 contribute to the substrate site; that span reads PG.

It belongs to the metallo-dependent hydrolases superfamily. DHOase family. Class I DHOase subfamily. Requires Zn(2+) as cofactor.

It carries out the reaction (S)-dihydroorotate + H2O = N-carbamoyl-L-aspartate + H(+). Its pathway is pyrimidine metabolism; UMP biosynthesis via de novo pathway; (S)-dihydroorotate from bicarbonate: step 3/3. In terms of biological role, catalyzes the reversible cyclization of carbamoyl aspartate to dihydroorotate. The protein is Dihydroorotase of Mycobacterium bovis (strain ATCC BAA-935 / AF2122/97).